The sequence spans 481 residues: Halobacterial transducer protein 9 (481 aa).

One can recognise a PAS domain in the interval 10-81 (SPFTVPLLLN…NKVADTPIDA (72 aa)). The region spanning 208 to 444 (DVERLEAASQ…EIAAMVDETA (237 aa)) is the Methyl-accepting transducer domain.

Belongs to the methyl-accepting chemotaxis (MCP) protein family.

It localises to the cytoplasm. Functionally, potentially involved in chemo- or phototactic signal transduction. In Halobacterium salinarum (strain ATCC 700922 / JCM 11081 / NRC-1) (Halobacterium halobium), this protein is Halobacterial transducer protein 9 (htr9).